Reading from the N-terminus, the 255-residue chain is uncharacterized protein (255 aa).

An N-terminal signal peptide occupies residues 1-23 (MKRLNKLVLGIIFLFLVISITAG). Residue Cys-24 is the site of N-palmitoyl cysteine attachment. Cys-24 carries S-diacylglycerol cysteine lipidation.

This sequence belongs to the staphylococcal tandem lipoprotein family.

Its subcellular location is the cell membrane. This is an uncharacterized protein from Staphylococcus aureus (strain Mu50 / ATCC 700699).